The sequence spans 1297 residues: DNA-directed RNA polymerase subunit beta'' (1297 aa).

Zn(2+) is bound by residues Cys220, Cys293, Cys300, and Cys303. The span at 1278–1288 shows a compositional bias: basic residues; sequence RRRKQNTKTRK. Residues 1278 to 1297 are disordered; the sequence is RRRKQNTKTRKNNLFSLNEK.

This sequence belongs to the RNA polymerase beta' chain family. RpoC2 subfamily. In terms of assembly, in plastids the minimal PEP RNA polymerase catalytic core is composed of four subunits: alpha, beta, beta', and beta''. When a (nuclear-encoded) sigma factor is associated with the core the holoenzyme is formed, which can initiate transcription. Zn(2+) serves as cofactor.

It localises to the plastid. The protein resides in the chloroplast. It carries out the reaction RNA(n) + a ribonucleoside 5'-triphosphate = RNA(n+1) + diphosphate. Functionally, DNA-dependent RNA polymerase catalyzes the transcription of DNA into RNA using the four ribonucleoside triphosphates as substrates. This Welwitschia mirabilis (Tree tumbo) protein is DNA-directed RNA polymerase subunit beta''.